The primary structure comprises 130 residues: Small ribosomal subunit protein uS9 (130 aa).

It belongs to the universal ribosomal protein uS9 family.

In Pseudomonas syringae pv. tomato (strain ATCC BAA-871 / DC3000), this protein is Small ribosomal subunit protein uS9.